A 312-amino-acid polypeptide reads, in one-letter code: MRIIFMGTPEFACPTLQKLIDRKEEVVAVITQPDRPRGRGQQTLPPPVKVLAEQHGIPVMQPVKVRVPEVVESIRELAPDLIVVVAFGQILPKSLLDIPPYGCINVHASLLPRWRGAAPLNWCIIDGDTETGVTTMMMDVGLDTGDMLLKKTTSIDPDENTQSLHDRLSIIGADALAETLDLLNAGKLVREKQDDALTCYASMLKKEDGLIDWSRDPRSVKNLVRGMTPWPGTYTFLDGKMLKVYRVRIAEGEGEPGTVIGAGRQGLEVACTGGSVIIEELQLEGKKRLPAGDFLAGYKIATGAKLGHKDAA.

(6S)-5,6,7,8-tetrahydrofolate is bound at residue 109–112 (SLLP).

It belongs to the Fmt family.

The enzyme catalyses L-methionyl-tRNA(fMet) + (6R)-10-formyltetrahydrofolate = N-formyl-L-methionyl-tRNA(fMet) + (6S)-5,6,7,8-tetrahydrofolate + H(+). In terms of biological role, attaches a formyl group to the free amino group of methionyl-tRNA(fMet). The formyl group appears to play a dual role in the initiator identity of N-formylmethionyl-tRNA by promoting its recognition by IF2 and preventing the misappropriation of this tRNA by the elongation apparatus. In Geotalea daltonii (strain DSM 22248 / JCM 15807 / FRC-32) (Geobacter daltonii), this protein is Methionyl-tRNA formyltransferase.